An 810-amino-acid polypeptide reads, in one-letter code: DNA gyrase subunit A (810 aa).

Positions 36–502 (LPDVRDGLKP…EVLKTSMSDL (467 aa)) constitute a Topo IIA-type catalytic domain. The active-site O-(5'-phospho-DNA)-tyrosine intermediate is Tyr124. Residues 499-810 (MSDLMQKENI…SLVSVSKFIK (312 aa)) form a C-terminal domain region. Positions 529–535 (QGTGGKG) match the GyrA-box motif.

This sequence belongs to the type II topoisomerase GyrA/ParC subunit family. Heterotetramer, composed of two GyrA and two GyrB chains. In the heterotetramer, GyrA contains the active site tyrosine that forms a transient covalent intermediate with DNA, while GyrB binds cofactors and catalyzes ATP hydrolysis.

Its subcellular location is the cytoplasm. The catalysed reaction is ATP-dependent breakage, passage and rejoining of double-stranded DNA.. Its function is as follows. A type II topoisomerase that negatively supercoils closed circular double-stranded (ds) DNA in an ATP-dependent manner to modulate DNA topology and maintain chromosomes in an underwound state. Negative supercoiling favors strand separation, and DNA replication, transcription, recombination and repair, all of which involve strand separation. Also able to catalyze the interconversion of other topological isomers of dsDNA rings, including catenanes and knotted rings. Type II topoisomerases break and join 2 DNA strands simultaneously in an ATP-dependent manner. This chain is DNA gyrase subunit A, found in Borreliella burgdorferi (strain ATCC 35210 / DSM 4680 / CIP 102532 / B31) (Borrelia burgdorferi).